A 500-amino-acid chain; its full sequence is Probable malate:quinone oxidoreductase (500 aa).

The protein belongs to the MQO family. The cofactor is FAD.

It carries out the reaction (S)-malate + a quinone = a quinol + oxaloacetate. Its pathway is carbohydrate metabolism; tricarboxylic acid cycle; oxaloacetate from (S)-malate (quinone route): step 1/1. The sequence is that of Probable malate:quinone oxidoreductase from Bacillus cereus (strain ZK / E33L).